The following is a 223-amino-acid chain: Fibronectin type III domain-containing protein 10 (223 aa).

An N-terminal signal peptide occupies residues 1–19 (MRAPPLLLLLAACAPPSGA). The Extracellular portion of the chain corresponds to 20-179 (AVDPTPPGWE…FTAEPAAMQE (160 aa)). The Fibronectin type-III domain occupies 72-168 (LASAGGSLRA…VVPPELAECV (97 aa)). 2 N-linked (GlcNAc...) asparagine glycosylation sites follow: asparagine 86 and asparagine 109. The helical transmembrane segment at 180-200 (IVVAMTAVGGSICVMLVVICL) threads the bilayer. At 201 to 223 (LVAYITENLMHPTFRRPSLRRQP) the chain is on the cytoplasmic side.

Its subcellular location is the membrane. The protein is Fibronectin type III domain-containing protein 10 (Fndc10) of Mus musculus (Mouse).